A 156-amino-acid chain; its full sequence is Ribosomal RNA large subunit methyltransferase H (156 aa).

S-adenosyl-L-methionine is bound by residues G104 and 123–128 (LSALTL).

It belongs to the RNA methyltransferase RlmH family. As to quaternary structure, homodimer.

The protein resides in the cytoplasm. The enzyme catalyses pseudouridine(1915) in 23S rRNA + S-adenosyl-L-methionine = N(3)-methylpseudouridine(1915) in 23S rRNA + S-adenosyl-L-homocysteine + H(+). Its function is as follows. Specifically methylates the pseudouridine at position 1915 (m3Psi1915) in 23S rRNA. This chain is Ribosomal RNA large subunit methyltransferase H, found in Nitrosospira multiformis (strain ATCC 25196 / NCIMB 11849 / C 71).